A 373-amino-acid polypeptide reads, in one-letter code: Chorismate synthase (373 aa).

R46 is a binding site for NADP(+). FMN is bound by residues 123–125, 251–252, G295, 310–314, and R337; these read RSS, NA, and KPTPS.

This sequence belongs to the chorismate synthase family. It depends on FMNH2 as a cofactor.

It carries out the reaction 5-O-(1-carboxyvinyl)-3-phosphoshikimate = chorismate + phosphate. The protein operates within metabolic intermediate biosynthesis; chorismate biosynthesis; chorismate from D-erythrose 4-phosphate and phosphoenolpyruvate: step 7/7. In terms of biological role, catalyzes the anti-1,4-elimination of the C-3 phosphate and the C-6 proR hydrogen from 5-enolpyruvylshikimate-3-phosphate (EPSP) to yield chorismate, which is the branch point compound that serves as the starting substrate for the three terminal pathways of aromatic amino acid biosynthesis. This reaction introduces a second double bond into the aromatic ring system. This chain is Chorismate synthase, found in Methanococcus maripaludis (strain DSM 14266 / JCM 13030 / NBRC 101832 / S2 / LL).